Here is a 504-residue protein sequence, read N- to C-terminus: Fumitremorgin C monooxygenase (504 aa).

Residues 12–32 (LGVVGASLIVILGIILLFPLG) traverse the membrane as a helical segment. C442 contributes to the heme binding site.

Belongs to the cytochrome P450 family. Requires heme as cofactor.

It is found in the membrane. The enzyme catalyses fumitremorgin C + 2 reduced [NADPH--hemoprotein reductase] + 2 O2 = 12alpha,13alpha-dihydroxyfumitremorgin C + 2 oxidized [NADPH--hemoprotein reductase] + 2 H2O + 2 H(+). Its pathway is mycotoxin biosynthesis. In terms of biological role, cytochrome P450 monooxygenase; part of the gene cluster that mediates the biosynthesis of fumitremorgins, indole alkaloids that carry not only intriguing chemical structures, but also interesting biological and pharmacological activities. The biosynthesis of fumitremorgin-type alkaloids begins by condensation of the two amino acids L-tryptophan and L-proline to brevianamide F, catalyzed by the non-ribosomal peptide synthetase ftmA. Brevianamide F is then prenylated by the prenyltransferase ftmPT1/ftmB in the presence of dimethylallyl diphosphate, resulting in the formation of tryprostatin B. The three cytochrome P450 monooxygenases, ftmP450-1/ftmC, ftmP450-2/ftmE and ftmP450-3/FtmG, are responsible for the conversion of tryprostatin B to 6-hydroxytryprostatin B, tryprostatin A to fumitremorgin C and fumitremorgin C to 12,13-dihydroxyfumitremorgin C, respectively. The putative methyltransferase ftmMT/ftmD is expected for the conversion of 6-hydroxytryprostatin B to tryprostatin A. FtmPT2/FtmH catalyzes the prenylation of 12,13-dihydroxyfumitre-morgin C in the presence of dimethylallyl diphosphate, resulting in the formation of fumitremorgin B. Fumitremorgin B is further converted to verruculogen by ftmOx1/ftmF via the insertion of an endoperoxide bond between the two prenyl moieties. In some fungal species, verruculogen is further converted to fumitremorgin A, but the enzymes involved in this step have not been identified yet. The chain is Fumitremorgin C monooxygenase from Aspergillus fumigatus (Neosartorya fumigata).